Here is a 620-residue protein sequence, read N- to C-terminus: MSRPGHGGLMPVNGLGFPPQNVARVVVWEWLNEHSRWRPYTATVCHHIENVLKEDARGSVVLGQVDAQLVPYIIDLQSMHQFRQDTGTMRPVRRNFYDPSSAPGKGIVWEWENDGGAWTAYDMDICITIQNAYEKQHPWLDLSSLGFCYLIYFNSMSQMNRQTRRRRRLRRRLDLAYPLTVGSIPKSQSWPVGASSGQPCSCQQCLLVNSTRAASNAILASQRRKAPPAPPLPPPPPPGGPPGALAVRPSATFTGAALWAAPAAGPAEPAPPPGAPPRSPGAPGGARTPGQNNLNRPGPQRTTSVSARASIPPGVPALPVKNLNGTGPVHPALAGMTGILLCAAGLPVCLTRAPKPILHPPPVSKSDVKPVPGVPGVCRKTKKKHLKKSKNPEDVVRRYMQKVKNPPDEDCTICMERLVTASGYEGVLRHKGVRPELVGRLGRCGHMYHLLCLVAMYSNGNKDGSLQCPTCKAIYGEKTGTQPPGKMEFHLIPHSLPGFPDTQTIRIVYDIPTGIQGPEHPNPGKKFTARGFPRHCYLPNNEKGRKVLRLLITAWERRLIFTIGTSNTTGESDTVVWNEIHHKTEFGSNLTGHGYPDASYLDNVLAELTAQGVSEAAAKA.

2 consecutive WWE domains span residues 14–94 and 95–171; these read GLGF…PVRR and NFYD…RLRR. 3 disordered regions span residues 221–248, 262–313, and 361–391; these read SQRR…LAVR, PAAG…SIPP, and PPVS…KSKN. 2 stretches are compositionally biased toward pro residues: residues 227-241 and 268-280; these read PPAP…PGGP and EPAP…PRSP. Positions 230–233 match the SH3-binding motif; sequence PPLP. Residues 291 to 307 show a composition bias toward polar residues; the sequence is QNNLNRPGPQRTTSVSA. Positions 379–389 are enriched in basic residues; that stretch reads RKTKKKHLKKS. The RING-type zinc-finger motif lies at 411–472; that stretch reads CTICMERLVT…DGSLQCPTCK (62 aa).

Belongs to the Deltex family. Homodimer. May form a heterodimer with other members of the Deltex family. Interacts with NOTCH1 via its N-terminal region and EIF3F, the interaction is required for NOTCH1 deubiquitination. Interacts with EP300. Forms a heterodimer with BBAP; the heterodimerization leading to an increase of in vitro ubiquitin ligase activity. Interacts with ITCH. In terms of processing, ubiquitinated; undergoes 'Lys-29'-linked polyubiquitination catalyzed by ITCH. Widely expressed. Strongly expressed in blood vessel. Also expressed in embryonic nervous system, pancreas, lung, adrenal gland, digestive tube and muscles. Expressed in MZB cells and developing B- and T-cells.

It is found in the cytoplasm. The protein localises to the nucleus. It carries out the reaction S-ubiquitinyl-[E2 ubiquitin-conjugating enzyme]-L-cysteine + [acceptor protein]-L-lysine = [E2 ubiquitin-conjugating enzyme]-L-cysteine + N(6)-ubiquitinyl-[acceptor protein]-L-lysine.. It functions in the pathway protein modification; protein ubiquitination. Functions as a ubiquitin ligase protein in vivo, mediating ubiquitination and promoting degradation of MEKK1, suggesting that it may regulate the Notch pathway via some ubiquitin ligase activity. Regulator of Notch signaling, a signaling pathway involved in cell-cell communications that regulates a broad spectrum of cell-fate determinations. Mainly acts as a positive regulator of Notch, but it also acts as a negative regulator, depending on the developmental and cell context. Mediates the antineural activity of Notch, possibly by inhibiting the transcriptional activation mediated by MATCH1. Involved in neurogenesis, lymphogenesis and myogenesis, and may also be involved in MZB (Marginal zone B) cell differentiation. Promotes B-cell development at the expense of T-cell development, suggesting that it can antagonize NOTCH1. This is E3 ubiquitin-protein ligase DTX1 (DTX1) from Homo sapiens (Human).